The sequence spans 338 residues: Ferredoxin--NADP reductase (338 aa).

Residues Asp-38, Gln-46, Tyr-51, Val-91, Phe-125, Asp-291, and Thr-331 each coordinate FAD.

The protein belongs to the ferredoxin--NADP reductase type 2 family. In terms of assembly, homodimer. It depends on FAD as a cofactor.

It catalyses the reaction 2 reduced [2Fe-2S]-[ferredoxin] + NADP(+) + H(+) = 2 oxidized [2Fe-2S]-[ferredoxin] + NADPH. The sequence is that of Ferredoxin--NADP reductase from Orientia tsutsugamushi (strain Ikeda) (Rickettsia tsutsugamushi).